Reading from the N-terminus, the 541-residue chain is Eukaryotic translation initiation factor 3 subunit L (541 aa).

The region spanning 308 to 516 is the PCI domain; that stretch reads TFSDILLYIQ…IHIADTKVSH (209 aa).

The protein belongs to the eIF-3 subunit L family. Component of the eukaryotic translation initiation factor 3 (eIF-3) complex. The eIF-3 complex interacts with pix.

It localises to the cytoplasm. In terms of biological role, component of the eukaryotic translation initiation factor 3 (eIF-3) complex, which is involved in protein synthesis of a specialized repertoire of mRNAs and, together with other initiation factors, stimulates binding of mRNA and methionyl-tRNAi to the 40S ribosome. The eIF-3 complex specifically targets and initiates translation of a subset of mRNAs involved in cell proliferation. This is Eukaryotic translation initiation factor 3 subunit L from Drosophila persimilis (Fruit fly).